The chain runs to 229 residues: ATP synthase subunit a (229 aa).

6 helical membrane passes run tyrosine 16–alanine 36, tyrosine 81–isoleucine 101, asparagine 110–valine 130, phenylalanine 142–isoleucine 162, valine 175–proline 195, and isoleucine 196–leucine 216.

It belongs to the ATPase A chain family. As to quaternary structure, F-type ATPases have 2 components, CF(1) - the catalytic core - and CF(0) - the membrane proton channel. CF(1) has five subunits: alpha(3), beta(3), gamma(1), delta(1), epsilon(1). CF(0) has three main subunits: a(1), b(2) and c(9-12). The alpha and beta chains form an alternating ring which encloses part of the gamma chain. CF(1) is attached to CF(0) by a central stalk formed by the gamma and epsilon chains, while a peripheral stalk is formed by the delta and b chains.

Its subcellular location is the cell inner membrane. Key component of the proton channel; it plays a direct role in the translocation of protons across the membrane. The sequence is that of ATP synthase subunit a from Bdellovibrio bacteriovorus (strain ATCC 15356 / DSM 50701 / NCIMB 9529 / HD100).